The chain runs to 745 residues: Elongation factor G, mitochondrial (745 aa).

Positions 40–317 constitute a tr-type G domain; it reads ERIRNIGISA…AVLDYLPNPG (278 aa). Residues 49 to 56, 116 to 120, and 170 to 173 contribute to the GTP site; these read AHIDSGKT, DTPGH, and NKLD.

The protein belongs to the TRAFAC class translation factor GTPase superfamily. Classic translation factor GTPase family. EF-G/EF-2 subfamily.

The protein resides in the mitochondrion. It functions in the pathway protein biosynthesis; polypeptide chain elongation. In terms of biological role, mitochondrial GTPase that catalyzes the GTP-dependent ribosomal translocation step during translation elongation. During this step, the ribosome changes from the pre-translocational (PRE) to the post-translocational (POST) state as the newly formed A-site-bound peptidyl-tRNA and P-site-bound deacylated tRNA move to the P and E sites, respectively. Catalyzes the coordinated movement of the two tRNA molecules, the mRNA and conformational changes in the ribosome. Essential during development as it acts as a retrograde signal from mitochondria to the nucleus to slow down cell proliferation if mitochondrial energy output is low. This Drosophila sechellia (Fruit fly) protein is Elongation factor G, mitochondrial.